A 309-amino-acid chain; its full sequence is Pantothenate synthetase (309 aa).

Position 2 is an N-acetylthreonine (T2). Position 40–47 (40–47) interacts with ATP; the sequence is MGALHEGH. Catalysis depends on H47, which acts as the Proton donor. Q72 lines the (R)-pantoate pocket. Residue Q72 coordinates beta-alanine. Positions 88, 89, and 92 each coordinate Mg(2+). 158–161 is a binding site for ATP; sequence GEKD. Q164 contributes to the (R)-pantoate binding site. Residues V187 and 195-198 each bind ATP; that span reads MSSR.

The protein belongs to the pantothenate synthetase family.

The protein localises to the cytoplasm. The enzyme catalyses (R)-pantoate + beta-alanine + ATP = (R)-pantothenate + AMP + diphosphate + H(+). It functions in the pathway cofactor biosynthesis; (R)-pantothenate biosynthesis; (R)-pantothenate from (R)-pantoate and beta-alanine: step 1/1. Its activity is regulated as follows. Pantothenate exhibits uncompetitive inhibition toward both D-pantoate and ATP, and non-competitive inhibition toward beta-alanine. AMPCPP exhibits competitive inhibition toward ATP, uncompetitive inhibition toward beta-alanine, and non-competitive inhibition toward D-pantoate. The enzyme is most active in the presence of magnesium or manganese. Other divalent cations (cobalt, nickel, zinc) are less effective. Functionally, catalyzes the condensation of pantoate with beta-alanine in an ATP-dependent reaction via a pantoyl-adenylate intermediate. This chain is Pantothenate synthetase (panC), found in Mycobacterium tuberculosis (strain ATCC 25618 / H37Rv).